Consider the following 164-residue polypeptide: Phosphopantetheine adenylyltransferase (164 aa).

A substrate-binding site is contributed by Thr-9. Residues 9 to 10 (TF) and His-17 each bind ATP. Substrate-binding residues include Lys-41, Leu-73, and Arg-87. Residues 88–90 (GLR), Glu-98, and 123–129 (YMFISAT) each bind ATP.

It belongs to the bacterial CoaD family. In terms of assembly, homohexamer. It depends on Mg(2+) as a cofactor.

It is found in the cytoplasm. It carries out the reaction (R)-4'-phosphopantetheine + ATP + H(+) = 3'-dephospho-CoA + diphosphate. It functions in the pathway cofactor biosynthesis; coenzyme A biosynthesis; CoA from (R)-pantothenate: step 4/5. In terms of biological role, reversibly transfers an adenylyl group from ATP to 4'-phosphopantetheine, yielding dephospho-CoA (dPCoA) and pyrophosphate. The chain is Phosphopantetheine adenylyltransferase from Nitrosomonas eutropha (strain DSM 101675 / C91 / Nm57).